The primary structure comprises 595 residues: Methionine--tRNA ligase (595 aa).

The 'HIGH' region signature appears at 11–21 (PYANGPRHIGH). Cysteine 143, cysteine 146, cysteine 156, and cysteine 159 together coordinate Zn(2+). A 'KMSKS' region motif is present at residues 350 to 354 (KFSSS). ATP is bound at residue serine 353.

It belongs to the class-I aminoacyl-tRNA synthetase family. MetG type 1 subfamily. In terms of assembly, monomer. Zn(2+) serves as cofactor.

It localises to the cytoplasm. The enzyme catalyses tRNA(Met) + L-methionine + ATP = L-methionyl-tRNA(Met) + AMP + diphosphate. Its function is as follows. Is required not only for elongation of protein synthesis but also for the initiation of all mRNA translation through initiator tRNA(fMet) aminoacylation. The polypeptide is Methionine--tRNA ligase (Nocardioides sp. (strain ATCC BAA-499 / JS614)).